The following is a 450-amino-acid chain: Na(+)/H(+) antiporter NhaA 2 (450 aa).

Helical transmembrane passes span 43–63, 86–106, 124–144, 155–175, 185–205, 208–228, 234–254, 258–278, 299–319, 326–346, 364–384, and 398–418; these read VGGA…NSPW, LTLG…VVGL, ALPM…FVAV, GWAI…AVIS, FLLT…AVFY, EINL…ALCV, SWWL…ESGV, VAGV…AGGP, VAVP…VSGL, PITL…IFLT, WIDV…SLLI, and FVKV…AVLL.

The protein belongs to the NhaA Na(+)/H(+) (TC 2.A.33) antiporter family.

Its subcellular location is the cell membrane. The catalysed reaction is Na(+)(in) + 2 H(+)(out) = Na(+)(out) + 2 H(+)(in). Na(+)/H(+) antiporter that extrudes sodium in exchange for external protons. This Mycobacterium sp. (strain KMS) protein is Na(+)/H(+) antiporter NhaA 2.